The chain runs to 149 residues: Prefoldin subunit alpha (149 aa).

This sequence belongs to the prefoldin subunit alpha family. In terms of assembly, heterohexamer of two alpha and four beta subunits.

It localises to the cytoplasm. Functionally, molecular chaperone capable of stabilizing a range of proteins. Seems to fulfill an ATP-independent, HSP70-like function in archaeal de novo protein folding. The sequence is that of Prefoldin subunit alpha from Methanospirillum hungatei JF-1 (strain ATCC 27890 / DSM 864 / NBRC 100397 / JF-1).